A 335-amino-acid chain; its full sequence is Terpene synthase 4 (335 aa).

The short motif at 103–108 (DDYIFE) is the DDxx(x)D/E motif element. Positions 243-251 (NDLYSFNRE) match the NDxxSxxxD/E motif motif.

This sequence belongs to the terpene synthase family.

The catalysed reaction is (2E,6E)-farnesyl diphosphate + H2O = (6E)-nerolidol + diphosphate. In terms of biological role, terpene synthase that converts its substrate farnesyl diphosphate (FPP) into the sesquiterpene (E)-nerolidol. This Dictyostelium discoideum (Social amoeba) protein is Terpene synthase 4.